A 377-amino-acid polypeptide reads, in one-letter code: tRNA-specific 2-thiouridylase MnmA (377 aa).

ATP contacts are provided by residues 16 to 23 (GMSGGVDS) and Met42. The tract at residues 102–104 (NPD) is interaction with target base in tRNA. The Nucleophile role is filled by Cys107. The cysteines at positions 107 and 204 are disulfide-linked. ATP is bound at residue Gly131. The segment at 154–156 (KDQ) is interaction with tRNA. Residue Cys204 is the Cysteine persulfide intermediate of the active site. Positions 315–316 (RY) are interaction with tRNA.

The protein belongs to the MnmA/TRMU family.

Its subcellular location is the cytoplasm. It catalyses the reaction S-sulfanyl-L-cysteinyl-[protein] + uridine(34) in tRNA + AH2 + ATP = 2-thiouridine(34) in tRNA + L-cysteinyl-[protein] + A + AMP + diphosphate + H(+). Catalyzes the 2-thiolation of uridine at the wobble position (U34) of tRNA, leading to the formation of s(2)U34. This chain is tRNA-specific 2-thiouridylase MnmA, found in Lacticaseibacillus paracasei (strain ATCC 334 / BCRC 17002 / CCUG 31169 / CIP 107868 / KCTC 3260 / NRRL B-441) (Lactobacillus paracasei).